We begin with the raw amino-acid sequence, 306 residues long: Polyisoprenyl-teichoic acid--peptidoglycan teichoic acid transferase TagU (306 aa).

Topologically, residues 1–11 (MRAEKRKKKKK) are cytoplasmic. A helical; Signal-anchor for type II membrane protein transmembrane segment spans residues 12-32 (ILYTIIALIGIFVLSTGSYAY). Residues 33-306 (YLWHKAASTV…TAELKESLNK (274 aa)) lie on the Extracellular side of the membrane.

It belongs to the LytR/CpsA/Psr (LCP) family.

The protein localises to the cell membrane. It functions in the pathway cell wall biogenesis. In terms of biological role, may catalyze the final step in cell wall teichoic acid biosynthesis, the transfer of the anionic cell wall polymers (APs) from their lipid-linked precursor to the cell wall peptidoglycan (PG). The protein is Polyisoprenyl-teichoic acid--peptidoglycan teichoic acid transferase TagU of Bacillus licheniformis (strain ATCC 14580 / DSM 13 / JCM 2505 / CCUG 7422 / NBRC 12200 / NCIMB 9375 / NCTC 10341 / NRRL NRS-1264 / Gibson 46).